The sequence spans 185 residues: Capsid protein (185 aa).

The tract at residues 136–185 is disordered; sequence NAPILSTLPETTVVRRRDRGRSPRRRTPSPRRRRSQSPRRRRSQSRESQC. A compositionally biased stretch (basic residues) spans 149–178; it reads VRRRDRGRSPRRRTPSPRRRRSQSPRRRRS. S157, S164, and S172 each carry phosphoserine; by host. The stretch at 157–163 is one 1; half-length repeat; the sequence is SPRRRTP. The interval 157–179 is 3 X 8 AA repeats of S-P-R-R-R-[PR]-S-Q; that stretch reads SPRRRTPSPRRRRSQSPRRRRSQ. The Bipartite nuclear localization signal motif lies at 160-177; it reads RRTPSPRRRRSQSPRRRR. A run of 2 repeats spans residues 164–171 and 172–179. The interval 179-185 is RNA binding; the sequence is QSRESQC.

Belongs to the orthohepadnavirus core antigen family. In terms of assembly, homodimerizes, then multimerizes. Interacts with cytosol exposed regions of viral L glycoprotein present in the reticulum-to-Golgi compartment. Interacts with human FLNB. Phosphorylated form interacts with host importin alpha; this interaction depends on the exposure of the NLS, which itself depends upon genome maturation and/or phosphorylation of the capsid protein. Interacts with host NUP153. Post-translationally, phosphorylated by host SRPK1, SRPK2, and maybe protein kinase C or GAPDH. Phosphorylation is critical for pregenomic RNA packaging. Protein kinase C phosphorylation is stimulated by HBx protein and may play a role in transport of the viral genome to the nucleus at the late step during the viral replication cycle.

It is found in the virion. Its subcellular location is the host cytoplasm. In terms of biological role, self assembles to form an icosahedral capsid. Most capsids appear to be large particles with an icosahedral symmetry of T=4 and consist of 240 copies of capsid protein, though a fraction forms smaller T=3 particles consisting of 180 capsid proteins. Entering capsids are transported along microtubules to the nucleus. Phosphorylation of the capsid is thought to induce exposure of nuclear localization signal in the C-terminal portion of the capsid protein that allows binding to the nuclear pore complex via the importin (karyopherin-) alpha and beta. Capsids are imported in intact form through the nuclear pore into the nuclear basket, where it probably binds NUP153. Only capsids that contain the mature viral genome can release the viral DNA and capsid protein into the nucleoplasm. Immature capsids get stuck in the basket. Capsids encapsulate the pre-genomic RNA and the P protein. Pre-genomic RNA is reverse-transcribed into DNA while the capsid is still in the cytoplasm. The capsid can then either be directed to the nucleus, providing more genomes for transcription, or bud through the endoplasmic reticulum to provide new virions. This chain is Capsid protein, found in Homo sapiens (Human).